A 371-amino-acid polypeptide reads, in one-letter code: Transaldolase (371 aa).

K132 is covalently cross-linked (Isoglutamyl lysine isopeptide (Lys-Gln) (interchain with Q-Cter in protein Pup)). K142 serves as the catalytic Schiff-base intermediate with substrate.

The protein belongs to the transaldolase family. Type 2 subfamily.

It localises to the cytoplasm. The enzyme catalyses D-sedoheptulose 7-phosphate + D-glyceraldehyde 3-phosphate = D-erythrose 4-phosphate + beta-D-fructose 6-phosphate. It participates in carbohydrate degradation; pentose phosphate pathway; D-glyceraldehyde 3-phosphate and beta-D-fructose 6-phosphate from D-ribose 5-phosphate and D-xylulose 5-phosphate (non-oxidative stage): step 2/3. Transaldolase is important for the balance of metabolites in the pentose-phosphate pathway. This is Transaldolase (tal) from Mycolicibacterium smegmatis (strain ATCC 700084 / mc(2)155) (Mycobacterium smegmatis).